The chain runs to 283 residues: Nucleoid occlusion protein (283 aa).

A DNA-binding region (H-T-H motif) is located at residues 148–167 (EALAQRLGKGQSTIANKLRL).

This sequence belongs to the ParB family.

It localises to the cytoplasm. It is found in the nucleoid. Effects nucleoid occlusion by binding relatively nonspecifically to DNA and preventing the assembly of the division machinery in the vicinity of the nucleoid, especially under conditions that disturb the cell cycle. It helps to coordinate cell division and chromosome segregation by preventing the formation of the Z ring through the nucleoid, which would cause chromosome breakage. In Bacillus licheniformis (strain ATCC 14580 / DSM 13 / JCM 2505 / CCUG 7422 / NBRC 12200 / NCIMB 9375 / NCTC 10341 / NRRL NRS-1264 / Gibson 46), this protein is Nucleoid occlusion protein.